A 3471-amino-acid polypeptide reads, in one-letter code: Genome polyprotein (3471 aa).

Residues 513 to 603 are a coiled coil; sequence EVQDALEKSM…RADIDALKKK (91 aa). Disordered stretches follow at residues 603 to 639 and 1271 to 1307; these read KPAQSVTPLPSPSGNSGTAGEQRPPPRRRPPVVEMSE and NKTTYLADEQPTTSAPRTSTVDTEEDPPTEGEIARTS. Composition is skewed to polar residues over residues 606–621 and 1271–1291; these read QSVTPLPSPSGNSGTA and NKTTYLADEQPTTSAPRTSTV. 2 helical membrane passes run 1493–1513 and 1592–1612; these read DKWIWAALASILVGAALLHYY and MSSLLTILSVVASLVMWGKIP. The SF3 helicase domain occupies 1748 to 1914; sequence LELMNESYTY…PDVPKNEANP (167 aa). ATP is bound at residue 1774–1781; that stretch reads GAPGVGKS. Residues 2360 to 2380 traverse the membrane as a helical segment; that stretch reads ILLAIGASVAVAGVAVGAVIL. Positions 2391–2401 are enriched in acidic residues; the sequence is EDEEIEGEEGE. 2 disordered regions span residues 2391 to 2411 and 2435 to 2460; these read EDEEIEGEEGETQASGAHESD and VAEAHEEKSTEKPRKPGNPTRKNFLG. Residues 2435–2448 show a composition bias toward basic and acidic residues; it reads VAEAHEEKSTEKPR. Positions 2629 to 2847 constitute a Peptidase C3 domain; sequence GVDRDLSMTN…YAETLTQEHL (219 aa). Active-site for picornain 3C-like protease activity residues include histidine 2677, glutamate 2714, and cysteine 2808. The 132-residue stretch at 3152–3283 folds into the RdRp catalytic domain; the sequence is TKGFAGDYSK…SVHEEFLDVY (132 aa).

Specific enzymatic cleavages by picornain 3C-like protease in vivo yield mature proteins. Picornain 3C-like protease is autocatalytically processed.

It is found in the virion. The protein resides in the host membrane. It carries out the reaction RNA(n) + a ribonucleoside 5'-triphosphate = RNA(n+1) + diphosphate. Functionally, picornain 3C-like protease is a thiol protease that probably cleaves the polyprotein. The chain is Genome polyprotein from Oryza sativa (Rice).